The following is a 95-amino-acid chain: Large ribosomal subunit protein bL27 (95 aa).

Residues 1 to 6 constitute a propeptide that is removed on maturation; that stretch reads MILQLF.

It belongs to the bacterial ribosomal protein bL27 family. Post-translationally, the N-terminus is cleaved by ribosomal processing cysteine protease Prp.

The polypeptide is Large ribosomal subunit protein bL27 (Caldanaerobacter subterraneus subsp. tengcongensis (strain DSM 15242 / JCM 11007 / NBRC 100824 / MB4) (Thermoanaerobacter tengcongensis)).